We begin with the raw amino-acid sequence, 770 residues long: MKIKNFIYFLIYFIFLFKVINGQNKTCKISVLLSGDKSDLGYNYMMNEARVLAESQLHMYPFSIYYEHLEESTLEAEHAIQDSVDKGANLIVVSSVIHFSLGVKYATKYKDEPIYWIIRGSKLVPTLPKVVILNFNSFELHYLLGYYAGLATKTGVVGFVSPGIGINTLSCDNSFYIGAKYARSNITFLDIHTGSWYNPEVSYKAAQKLIENGADVIGMSQDDMSVQKAIMDSGGLGLGVTGYPGHYQFGSDVAYSYLTNWTNLFITYANHVINDDWPAFDSFFTNLSRKDAIFMDDFSFRVPIDIQTKTKIELENLMNTSYAPYKSDPILESIGLQFSGNWINDTQFRANTKILPSYGDSTVDYPESLKIGVTVVSGFCIFLCLISMIIVIKFKEAKVIKSSSPIFCLLILFGCIVIFVGCIMFARSPTDGSCRSRVWLLSLGYTIFLGNLMVKNWRIWLLFDNPKLKKRAITNWKLYPWVSGIVIIDIVILSIWQALGDIVAESRTGIDSLTKYEYRNVCASSDQGSIALYLLLVFHGLILLVACFISFKIKVVDIEEFNESKPITTSVYIITFCLFIVIPIMVSSPTVTTQTTIICICALITTMLSIILLFGTKFFKMITVGLELGQTFVTSTKSSSHSQRTKSSKSSNGSGPKINGFGGNVLNLDDDSDEISSEKEKKKPIESNPKDHMAVFTSDEETSKASKFSSEQFSREQINDNIILENNNDNEEKQKDEEEIKEEKLLVSEIQAKRLSLEQNGQTEIDSNDV.

The first 22 residues, 1–22 (MKIKNFIYFLIYFIFLFKVING), serve as a signal peptide directing secretion. Residues 23–370 (QNKTCKISVL…STVDYPESLK (348 aa)) lie on the Extracellular side of the membrane. Asn24, Asn185, Asn260, Asn286, Asn319, and Asn344 each carry an N-linked (GlcNAc...) asparagine glycan. Residues 371 to 391 (IGVTVVSGFCIFLCLISMIIV) form a helical membrane-spanning segment. Residues 392–405 (IKFKEAKVIKSSSP) lie on the Cytoplasmic side of the membrane. The helical transmembrane segment at 406–426 (IFCLLILFGCIVIFVGCIMFA) threads the bilayer. The Extracellular segment spans residues 427-442 (RSPTDGSCRSRVWLLS). Residues 443–463 (LGYTIFLGNLMVKNWRIWLLF) form a helical membrane-spanning segment. Topologically, residues 464-483 (DNPKLKKRAITNWKLYPWVS) are cytoplasmic. The helical transmembrane segment at 484 to 504 (GIVIIDIVILSIWQALGDIVA) threads the bilayer. Over 505-528 (ESRTGIDSLTKYEYRNVCASSDQG) the chain is Extracellular. The helical transmembrane segment at 529–549 (SIALYLLLVFHGLILLVACFI) threads the bilayer. Residues 550–565 (SFKIKVVDIEEFNESK) lie on the Cytoplasmic side of the membrane. The helical transmembrane segment at 566–586 (PITTSVYIITFCLFIVIPIMV) threads the bilayer. Over 587–594 (SSPTVTTQ) the chain is Extracellular. A helical membrane pass occupies residues 595–615 (TTIICICALITTMLSIILLFG). The Cytoplasmic portion of the chain corresponds to 616–770 (TKFFKMITVG…GQTEIDSNDV (155 aa)). Positions 639–740 (SSHSQRTKSS…EEKQKDEEEI (102 aa)) are disordered. 2 stretches are compositionally biased toward basic and acidic residues: residues 676–693 (SSEKEKKKPIESNPKDHM) and 730–740 (NEEKQKDEEEI). A coiled-coil region spans residues 715–760 (REQINDNIILENNNDNEEKQKDEEEIKEEKLLVSEIQAKRLSLEQN).

It in the N-terminal section; belongs to the BMP lipoprotein family. In the C-terminal section; belongs to the G-protein coupled receptor 3 family. GABA-B receptor subfamily.

It is found in the membrane. The polypeptide is Metabotropic glutamate receptor-like protein F (grlF) (Dictyostelium discoideum (Social amoeba)).